The following is a 119-amino-acid chain: Large ribosomal subunit protein bL20 (119 aa).

It belongs to the bacterial ribosomal protein bL20 family.

Functionally, binds directly to 23S ribosomal RNA and is necessary for the in vitro assembly process of the 50S ribosomal subunit. It is not involved in the protein synthesizing functions of that subunit. The chain is Large ribosomal subunit protein bL20 from Brevibacillus brevis (strain 47 / JCM 6285 / NBRC 100599).